Here is a 231-residue protein sequence, read N- to C-terminus: Eukaryotic translation initiation factor 4E-1 (231 aa).

EIF4G-binding stretches follow at residues 56-59 and 66-102; these read HPLE and FDNP…NNIH. Residues 74-79, Lys-106, and 124-125 contribute to the mRNA site; these read RQTAWG and WE. Cysteines 129 and 167 form a disulfide. The segment at 150–159 is EIF4G-binding; sequence YTLLAMIGHQ. MRNA-binding positions include 174–179 and 219–223; these read RAKGEK and KRLDR.

The protein belongs to the eukaryotic initiation factor 4E family. EIF4F is a multi-subunit complex, the composition of which varies with external and internal environmental conditions. It is composed of at least EIF4A, EIF4E and EIF4G. EIF4E is also known to interact with other partners. In higher plants two isoforms of EIF4F have been identified, named isoform EIF4F and isoform EIF(iso)4F. Isoform EIF4F has subunits p220 and p26, whereas isoform EIF(iso)4F has subunits p82 and p28. As to quaternary structure, (Microbial infection) Interacts with potyvirus viral genome-linked protein (VPg); mostly with tobacco etch virus (TEV-HAT) VPg and, to a lower extent, with potato virus Y (PVY-LYE84 and PVY-LYE90) and pepper mottle virus (PepMoV) VPg. According to the redox status, the Cys-129-Cys-167 disulfide bridge may have a role in regulating protein function by affecting its ability to bind capped mRNA.

It is found in the nucleus. Its subcellular location is the cytoplasm. Its function is as follows. Component of the protein complex eIF4F, which is involved in the recognition of the mRNA cap, ATP-dependent unwinding of 5'-terminal secondary structure and recruitment of mRNA to the ribosome. Recognizes and binds the 7-methylguanosine-containing mRNA cap during an early step in the initiation of protein synthesis and facilitates ribosome binding by inducing the unwinding of the mRNAs secondary structures. Key component of recessive resistance to potyviruses. Functionally, (Microbial infection) Susceptibility host factor required for viral infection (e.g. potato virus Y (PVY), pepper mottle virus (PepMoV) and tobacco etch virus (TEV)) by recruiting viral RNAs to the host ribosomal complex via an interaction with viral genome-linked protein (VPg). This Solanum lycopersicum (Tomato) protein is Eukaryotic translation initiation factor 4E-1.